A 288-amino-acid chain; its full sequence is Proline iminopeptidase (288 aa).

The AB hydrolase-1 domain maps to 27–274 (PVIVLHGGPG…SAHMPYIEEP (248 aa)). Ser101 functions as the Nucleophile in the catalytic mechanism. Residue Asp240 is part of the active site. Residue His267 is the Proton donor of the active site.

This sequence belongs to the peptidase S33 family. Monomer.

It is found in the cytoplasm. It catalyses the reaction Release of N-terminal proline from a peptide.. Completely inhibited by p-chloromercuribenzoate (PCMB) and heavy metal salts. Partially inhibited by proline and proline derivatives with proline as the amino terminus. Enzyme inactivated by PCMB is reactivated by incubation with 2-mercaptoethanol. Releases the N-terminal proline from various substrates including at least dipeptides Pro-Pro, Pro-Gln, Pro-Trp and Pro-Tyr. Also acts on amides (Pro-beta NA) and oligopeptides including Pro-Leu-GlyNH2, Pro-Leu-Gly, Pro-Phe-Gly-Lys, Pro-Pro-Ala-OBut and Pro-Pro-Gly-(Pro-Pro-Gly)(4). Higher activity toward small peptides (up to three residues), but very low activity for longer peptides. Has no activity against p-nitrophenyl acetate, poly_L-proline, Met-Pro or amino acyl amides other than Pro-betaNA (Pyr-betaNA, Phe-betaNA, Cys-betaNA, Met-betaNA, Leu-betaNA, Ala-betaNA and Z-Gly-Pro-betaNA). The chain is Proline iminopeptidase (pip) from Heyndrickxia coagulans (Weizmannia coagulans).